A 199-amino-acid polypeptide reads, in one-letter code: Holliday junction branch migration complex subunit RuvA (199 aa).

Positions 1-65 are domain I; the sequence is MIGWLHGQII…EDALLLYGFL (65 aa). Residues 66 to 144 form a domain II region; the sequence is DKEERSLFRS…QFDGSVSDTF (79 aa). The tract at residues 144-148 is flexible linker; sequence FQKQA. A domain III region spans residues 149–199; sequence GSTHSQQEAISALEALGYKPQEAWKVMNKIDNGNKSCEQLIREALQILSSR.

It belongs to the RuvA family. Homotetramer. Forms an RuvA(8)-RuvB(12)-Holliday junction (HJ) complex. HJ DNA is sandwiched between 2 RuvA tetramers; dsDNA enters through RuvA and exits via RuvB. An RuvB hexamer assembles on each DNA strand where it exits the tetramer. Each RuvB hexamer is contacted by two RuvA subunits (via domain III) on 2 adjacent RuvB subunits; this complex drives branch migration. In the full resolvosome a probable DNA-RuvA(4)-RuvB(12)-RuvC(2) complex forms which resolves the HJ.

The protein resides in the cytoplasm. In terms of biological role, the RuvA-RuvB-RuvC complex processes Holliday junction (HJ) DNA during genetic recombination and DNA repair, while the RuvA-RuvB complex plays an important role in the rescue of blocked DNA replication forks via replication fork reversal (RFR). RuvA specifically binds to HJ cruciform DNA, conferring on it an open structure. The RuvB hexamer acts as an ATP-dependent pump, pulling dsDNA into and through the RuvAB complex. HJ branch migration allows RuvC to scan DNA until it finds its consensus sequence, where it cleaves and resolves the cruciform DNA. The chain is Holliday junction branch migration complex subunit RuvA from Legionella pneumophila subsp. pneumophila (strain Philadelphia 1 / ATCC 33152 / DSM 7513).